A 212-amino-acid polypeptide reads, in one-letter code: MSSGVMVDPDVQTSFQKLSEGRKEYRYIIFKIDENKVIVEAAVTQDQLGITGDDYDDSSKAAFDKFVEDVKSRTDNLTDCRYAVFDFKFTCSRVGAGTSKMDKIIFLQICPDGASIKKKMVYASSAAAIKTSLGTGKILQFQVSDESEMSHKELLNNCPDNAPVRRRMLYASSVRALKASLGLESLFQVQASEMSDLDEKSVKSDLMSNQRI.

One can recognise an ADF-H domain in the interval 3 to 159; that stretch reads SGVMVDPDVQ…SHKELLNNCP (157 aa).

It belongs to the actin-binding proteins ADF family. Interacts with F-actin.

Depolymerizes growing actin filaments in muscle cells; required for the assembly of actin filaments into the functional contractile myofilament lattice of muscle. Competes with unc-87 for actin binding and inhibits the actin-bundling activity of unc-87. The polypeptide is Actin-depolymerizing factor 1, isoforms a/b (Caenorhabditis elegans).